The following is a 168-amino-acid chain: Crossover junction endodeoxyribonuclease RuvC (168 aa).

Active-site residues include Asp8, Glu68, and Asp140. Positions 8, 68, and 140 each coordinate Mg(2+).

The protein belongs to the RuvC family. Homodimer which binds Holliday junction (HJ) DNA. The HJ becomes 2-fold symmetrical on binding to RuvC with unstacked arms; it has a different conformation from HJ DNA in complex with RuvA. In the full resolvosome a probable DNA-RuvA(4)-RuvB(12)-RuvC(2) complex forms which resolves the HJ. Mg(2+) serves as cofactor.

It localises to the cytoplasm. It catalyses the reaction Endonucleolytic cleavage at a junction such as a reciprocal single-stranded crossover between two homologous DNA duplexes (Holliday junction).. In terms of biological role, the RuvA-RuvB-RuvC complex processes Holliday junction (HJ) DNA during genetic recombination and DNA repair. Endonuclease that resolves HJ intermediates. Cleaves cruciform DNA by making single-stranded nicks across the HJ at symmetrical positions within the homologous arms, yielding a 5'-phosphate and a 3'-hydroxyl group; requires a central core of homology in the junction. The consensus cleavage sequence is 5'-(A/T)TT(C/G)-3'. Cleavage occurs on the 3'-side of the TT dinucleotide at the point of strand exchange. HJ branch migration catalyzed by RuvA-RuvB allows RuvC to scan DNA until it finds its consensus sequence, where it cleaves and resolves the cruciform DNA. This chain is Crossover junction endodeoxyribonuclease RuvC, found in Gluconobacter oxydans (strain 621H) (Gluconobacter suboxydans).